Here is a 413-residue protein sequence, read N- to C-terminus: Serine hydroxymethyltransferase (413 aa).

(6S)-5,6,7,8-tetrahydrofolate-binding positions include L115 and G119 to L121. N6-(pyridoxal phosphate)lysine is present on K224.

This sequence belongs to the SHMT family. Homodimer. The cofactor is pyridoxal 5'-phosphate.

Its subcellular location is the cytoplasm. It catalyses the reaction (6R)-5,10-methylene-5,6,7,8-tetrahydrofolate + glycine + H2O = (6S)-5,6,7,8-tetrahydrofolate + L-serine. It participates in one-carbon metabolism; tetrahydrofolate interconversion. Its pathway is amino-acid biosynthesis; glycine biosynthesis; glycine from L-serine: step 1/1. Its function is as follows. Catalyzes the reversible interconversion of serine and glycine with tetrahydrofolate (THF) serving as the one-carbon carrier. This reaction serves as the major source of one-carbon groups required for the biosynthesis of purines, thymidylate, methionine, and other important biomolecules. Also exhibits THF-independent aldolase activity toward beta-hydroxyamino acids, producing glycine and aldehydes, via a retro-aldol mechanism. The polypeptide is Serine hydroxymethyltransferase (Mycoplasma capricolum subsp. capricolum (strain California kid / ATCC 27343 / NCTC 10154)).